The chain runs to 319 residues: Protein SODIUM POTASSIUM ROOT DEFECTIVE 1 (319 aa).

Polar residues predominate over residues 1 to 13 (MLCASQASTTTLC). Disordered regions lie at residues 1-113 (MLCA…TPQG) and 191-248 (SPDN…NSSS). The span at 14–27 (STMDQTSQPSSSSS) shows a compositional bias: low complexity. Over residues 36 to 49 (AIDRHNPIIRDGRR) the composition is skewed to basic and acidic residues. Over residues 58 to 67 (LNPSSSSSST) the composition is skewed to low complexity. Composition is skewed to polar residues over residues 104-113 (SCFSSDTPQG) and 200-210 (TKASPTASLSS). Pro residues predominate over residues 224 to 242 (SPPPPPPPSPPQSSPPSPP). Residues 249-315 (DQVVVLRVSL…KVKNAQFWPE (67 aa)) form the HMA domain. Zn(2+)-binding residues include Cys260 and Cys263.

Interacts with FT, but not with TSF (TWIN SISTER OF FT). In terms of tissue distribution, expressed in vascular tissues of cotyledons, rosette leaves and roots in developing seedlings before and during the floral transition. Expressed specifically in the phloem companion cells. Not detected in embryos or seeds. Not detected in the vegetative shoot apex.

It is found in the cytoplasm. The protein resides in the nucleus. Its subcellular location is the endoplasmic reticulum. In terms of biological role, required for root meristem maintenance after germination. Involved in phloem translocation, starch accumulation and flowering. Promotes flowering in the photoperiod pathway. Regulates long-distance movement of FT from leaves to the shoot apex through the phloem stream. In Arabidopsis thaliana (Mouse-ear cress), this protein is Protein SODIUM POTASSIUM ROOT DEFECTIVE 1.